The following is a 387-amino-acid chain: ATP phosphoribosyltransferase regulatory subunit (387 aa).

The protein belongs to the class-II aminoacyl-tRNA synthetase family. HisZ subfamily. In terms of assembly, heteromultimer composed of HisG and HisZ subunits.

The protein resides in the cytoplasm. It functions in the pathway amino-acid biosynthesis; L-histidine biosynthesis; L-histidine from 5-phospho-alpha-D-ribose 1-diphosphate: step 1/9. Functionally, required for the first step of histidine biosynthesis. May allow the feedback regulation of ATP phosphoribosyltransferase activity by histidine. The polypeptide is ATP phosphoribosyltransferase regulatory subunit (Polynucleobacter asymbioticus (strain DSM 18221 / CIP 109841 / QLW-P1DMWA-1) (Polynucleobacter necessarius subsp. asymbioticus)).